The chain runs to 505 residues: AAA-ATPase At5g17760 (505 aa).

Residues 11 to 27 (TSVFTAYASMAGYMMMI) traverse the membrane as a helical segment. The segment at 136–155 (GGGGGVGGRGGGGGRRGGMD) is disordered. Positions 137 to 151 (GGGGVGGRGGGGGRR) are enriched in gly residues. ATP is bound at residue 260–267 (GPPGTGKS).

This sequence belongs to the AAA ATPase family. BCS1 subfamily. The cofactor is Mg(2+).

It localises to the membrane. The catalysed reaction is ATP + H2O = ADP + phosphate + H(+). In Arabidopsis thaliana (Mouse-ear cress), this protein is AAA-ATPase At5g17760.